Reading from the N-terminus, the 525-residue chain is Histidine-rich glycoprotein (525 aa).

The first 18 residues, 1-18 (MKVLTTALLLVTLQCSHA), serve as a signal peptide directing secretion. The region spanning 19-122 (LSPTNCDASE…ESQDLSVNGY (104 aa)) is the Cystatin 1 domain. 5 cysteine pairs are disulfide-bonded: Cys24–Cys504, Cys78–Cys89, Cys103–Cys124, Cys201–Cys414, and Cys216–Cys239. The interaction with ATP5F1A stretch occupies residues 41–84 (GRRSGYVFELLRVSDAHLDRAGTATVYYLALDVIESDCWVLSTK). N-linked (GlcNAc...) asparagine glycans are attached at residues Asn112, Asn123, and Asn200. The region spanning 135 to 240 (NTKDSPVLLD…TPDSIDINCE (106 aa)) is the Cystatin 2 domain. The segment at 273–447 (GSRDHHHTHK…SRKRGPGKGL (175 aa)) is disordered. Over residues 293-303 (EGKDNSDRPRL) the composition is skewed to basic and acidic residues. Asn322 and Asn330 each carry an N-linked (GlcNAc...) asparagine glycan. Basic residues predominate over residues 339–404 (HGHRPHGHHP…GHHPHGHHPH (66 aa)). The segment at 345–379 (GHHPHSHHPPGHHSHGHHPHGHHPHSHHSHGHHPP) is necessary for endothelial cell focal adhesions and anti-angiogenic activities. Position 438 is a phosphoserine (Ser438).

Interacts with THBS1 (via the TSP type I repeats); the interaction blocks the antiangiogenic effect of THBS1 with CD36. Interacts with HPSE; the interaction is enhanced at acidic pH, partially inhibits binding of HPSE to cell surface receptors and modulates its enzymatic activity. Interacts (via the HRR domain) with TMP1; the interaction partially mediates the antiangiogenic properties of HRG. Interacts with kappa and lambda light chains of IgG molecules. Interacts with ATP5F1A; the interaction occurs on the surface of T-cells and alters their cell morphology in concert with CONA. Binds IgG molecules containing kappa and lambda light chains and inhibits the formation of insoluble immunoglobulin complexes. Interacts with F12; the interaction, which is enhanced in the presence of zinc ions and inhibited by heparin-binding to HRG, inhibits factor XII autoactivation and contact-initiated coagulation. Interacts with PLG (via its Kringle domains); the interaction tethers PLG to the cell surface and enhances its activation. Interacts (via the HRR domain) with TPM1; the interaction appears to contribute to the antiangiogenic properties of the HRR domain. Interacts with THBS2; the interaction blocks the antiangiogenic effect of THBS2 with CD36. It depends on Zn(2+) as a cofactor. Proteolytic cleavage produces several HRG fragments which are mostly disulfide-linked and, therefore, not released. Cleavage by plasmin is inhibited in the presence of heparin, zinc ions or in an acidic environment. Cleavage reduces binding of HRG to heparan sulfate, but enhances the ability of HRG to bind and tether plasminogen to the cell surface. On platelet activation, releases a 33 kDa antiangiogenic peptide which encompasses the HRR. Also cleaved in the C-terminal by plasmin. Post-translationally, N-glycosylated. As to expression, expressed in liver, blood plasma, serum and in platelets. Also present in fibrin clots, wound fluid from acute wounds and chronic leg ulcers.

The protein resides in the secreted. Its function is as follows. Plasma glycoprotein that binds a number of ligands such as heme, heparin, heparan sulfate, thrombospondin, plasminogen, and divalent metal ions. Binds heparin and heparin/glycosaminoglycans in a zinc-dependent manner. Binds heparan sulfate on the surface of liver, lung, kidney and heart endothelial cells. Binds to N-sulfated polysaccharide chains on the surface of liver endothelial cells. Inhibits rosette formation. Acts as an adapter protein and is implicated in regulating many processes such as immune complex and pathogen clearance, cell chemotaxis, cell adhesion, angiogenesis, coagulation and fibrinolysis. Mediates clearance of necrotic cells through enhancing the phagocytosis of necrotic cells in a heparan sulfate-dependent pathway. This process can be regulated by the presence of certain HRG ligands such as heparin and zinc ions. Binds to IgG subclasses of immunoglobins containing kappa and lambda light chains with different affinities regulating their clearance and inhibiting the formation of insoluble immune complexes. Tethers plasminogen to the cell surface. Binds T-cells and alters the cell morphology. Acts as a regulator of the vascular endothelial growth factor (VEGF) signaling pathway; inhibits endothelial cell motility by reducing VEGF-induced complex formation between PXN/paxillin and ILK/integrin-linked protein kinase and by promoting inhibition of VEGF-induced tyrosine phosphorylation of focal adhesion kinases and alpha-actinins in endothelial cells. Also plays a role in the regulation of tumor angiogenesis and tumor immune surveillance. Normalizes tumor vessels and promotes antitumor immunity by polarizing tumor-associated macrophages, leading to decreased tumor growth and metastasis. Modulates angiogenesis by blocking the CD6-mediated antiangiongenic effect of thrombospondins, THBS1 and THBS2. The protein is Histidine-rich glycoprotein (Hrg) of Mus musculus (Mouse).